A 559-amino-acid polypeptide reads, in one-letter code: Aminopeptidase Q (559 aa).

The Cytoplasmic portion of the chain corresponds to 1-13 (MSRPFSSGVYVSR). Residues 14 to 34 (GVALLLAALTAVLLLVLVALA) form a helical; Signal-anchor for type II membrane protein membrane-spanning segment. The Lumenal segment spans residues 35 to 559 (SLYGSCAHVQ…VPFRHFLAEH (525 aa)). Residues Asn121 and Asn129 are each glycosylated (N-linked (GlcNAc...) asparagine). Glu237 serves as a coordination point for substrate. Asn258, Asn285, and Asn343 each carry an N-linked (GlcNAc...) asparagine glycan. Position 376 to 380 (376 to 380 (GAMEN)) interacts with substrate. Position 412 (His412) interacts with Zn(2+). Glu413 functions as the Proton acceptor in the catalytic mechanism. His416 and Glu435 together coordinate Zn(2+).

This sequence belongs to the peptidase M1 family. As to quaternary structure, homodimer. It depends on Zn(2+) as a cofactor. Post-translationally, N-glycosylated.

It localises to the membrane. Its activity is regulated as follows. Inhibited by bestatin. In terms of biological role, metalloprotease which may be important for placentation by regulating biological activity of key peptides at the embryo-maternal interface. On synthetic substrates it shows a marked preference for Leu-4-methylcoumaryl-7-amide (Leu-MCA) over Met-MCA, Arg-LCA and Lys-LCA. Cleaves the N-terminal amino acid of several peptides such as angiotensin-3, kisspeptin-10 and endokinin C. In Mus musculus (Mouse), this protein is Aminopeptidase Q.